The chain runs to 209 residues: Imidazoleglycerol-phosphate dehydratase (209 aa).

It belongs to the imidazoleglycerol-phosphate dehydratase family.

Its subcellular location is the cytoplasm. It catalyses the reaction D-erythro-1-(imidazol-4-yl)glycerol 3-phosphate = 3-(imidazol-4-yl)-2-oxopropyl phosphate + H2O. It participates in amino-acid biosynthesis; L-histidine biosynthesis; L-histidine from 5-phospho-alpha-D-ribose 1-diphosphate: step 6/9. This Nostoc sp. (strain PCC 7120 / SAG 25.82 / UTEX 2576) protein is Imidazoleglycerol-phosphate dehydratase.